A 209-amino-acid polypeptide reads, in one-letter code: Chaperone protein TorD (209 aa).

It belongs to the TorD/DmsD family. TorD subfamily.

Its subcellular location is the cytoplasm. Involved in the biogenesis of TorA. Acts on TorA before the insertion of the molybdenum cofactor and, as a result, probably favors a conformation of the apoenzyme that is competent for acquiring the cofactor. This is Chaperone protein TorD from Shewanella baltica (strain OS155 / ATCC BAA-1091).